Here is a 90-residue protein sequence, read N- to C-terminus: Small ribosomal subunit protein uS19 (90 aa).

The protein belongs to the universal ribosomal protein uS19 family.

Its function is as follows. Protein S19 forms a complex with S13 that binds strongly to the 16S ribosomal RNA. In Thioalkalivibrio sulfidiphilus (strain HL-EbGR7), this protein is Small ribosomal subunit protein uS19.